The following is a 138-amino-acid chain: Cysteine desulfuration protein SufE (138 aa).

Cys-51 (cysteine persulfide intermediate) is an active-site residue.

This sequence belongs to the SufE family. Homodimer. Interacts with SufS.

It localises to the cytoplasm. It participates in cofactor biosynthesis; iron-sulfur cluster biosynthesis. Participates in cysteine desulfuration mediated by SufS. Cysteine desulfuration mobilizes sulfur from L-cysteine to yield L-alanine and constitutes an essential step in sulfur metabolism for biosynthesis of a variety of sulfur-containing biomolecules. Functions as a sulfur acceptor for SufS, by mediating the direct transfer of the sulfur atom from the S-sulfanylcysteine of SufS, an intermediate product of cysteine desulfuration process. This is Cysteine desulfuration protein SufE from Escherichia coli O157:H7.